Consider the following 376-residue polypeptide: Succinyl-diaminopimelate desuccinylase (376 aa).

His67 serves as a coordination point for Zn(2+). Residue Asp69 is part of the active site. Residue Asp100 participates in Zn(2+) binding. Glu134 acts as the Proton acceptor in catalysis. Positions 135, 163, and 349 each coordinate Zn(2+).

The protein belongs to the peptidase M20A family. DapE subfamily. Homodimer. It depends on Zn(2+) as a cofactor. Co(2+) serves as cofactor.

It catalyses the reaction N-succinyl-(2S,6S)-2,6-diaminopimelate + H2O = (2S,6S)-2,6-diaminopimelate + succinate. It functions in the pathway amino-acid biosynthesis; L-lysine biosynthesis via DAP pathway; LL-2,6-diaminopimelate from (S)-tetrahydrodipicolinate (succinylase route): step 3/3. Its function is as follows. Catalyzes the hydrolysis of N-succinyl-L,L-diaminopimelic acid (SDAP), forming succinate and LL-2,6-diaminopimelate (DAP), an intermediate involved in the bacterial biosynthesis of lysine and meso-diaminopimelic acid, an essential component of bacterial cell walls. The polypeptide is Succinyl-diaminopimelate desuccinylase (Haemophilus ducreyi (strain 35000HP / ATCC 700724)).